We begin with the raw amino-acid sequence, 295 residues long: Small ribosomal subunit protein uS2 (295 aa).

A disordered region spans residues K260–A295.

It belongs to the universal ribosomal protein uS2 family.

The protein is Small ribosomal subunit protein uS2 of Rickettsia felis (strain ATCC VR-1525 / URRWXCal2) (Rickettsia azadi).